The sequence spans 162 residues: Lipoprotein signal peptidase (162 aa).

4 consecutive transmembrane segments (helical) span residues Leu-9–Thr-29, Val-39–Phe-59, Val-66–Tyr-86, and Val-95–Phe-115. Residues Asp-122 and Asp-140 contribute to the active site. A helical membrane pass occupies residues Phe-136–Phe-156.

Belongs to the peptidase A8 family.

Its subcellular location is the cell inner membrane. The catalysed reaction is Release of signal peptides from bacterial membrane prolipoproteins. Hydrolyzes -Xaa-Yaa-Zaa-|-(S,diacylglyceryl)Cys-, in which Xaa is hydrophobic (preferably Leu), and Yaa (Ala or Ser) and Zaa (Gly or Ala) have small, neutral side chains.. Its pathway is protein modification; lipoprotein biosynthesis (signal peptide cleavage). Its function is as follows. This protein specifically catalyzes the removal of signal peptides from prolipoproteins. The polypeptide is Lipoprotein signal peptidase (Desulforapulum autotrophicum (strain ATCC 43914 / DSM 3382 / VKM B-1955 / HRM2) (Desulfobacterium autotrophicum)).